Here is a 279-residue protein sequence, read N- to C-terminus: Oxygen-dependent coproporphyrinogen-III oxidase (279 aa).

S102 provides a ligand contact to substrate. The a divalent metal cation site is built by H106 and H116. H116 functions as the Proton donor in the catalytic mechanism. Substrate is bound at residue 118–120 (NTR). The a divalent metal cation site is built by H149 and H179. The important for dimerization stretch occupies residues 244 to 279 (YVEFNLLYDRGTKFGLMTDGNVEAILMSLPPEVKFN).

The protein belongs to the aerobic coproporphyrinogen-III oxidase family. As to quaternary structure, homodimer. A divalent metal cation is required as a cofactor.

The protein resides in the cytoplasm. It catalyses the reaction coproporphyrinogen III + O2 + 2 H(+) = protoporphyrinogen IX + 2 CO2 + 2 H2O. It functions in the pathway porphyrin-containing compound metabolism; protoporphyrin-IX biosynthesis; protoporphyrinogen-IX from coproporphyrinogen-III (O2 route): step 1/1. Its function is as follows. Involved in the heme biosynthesis. Catalyzes the aerobic oxidative decarboxylation of propionate groups of rings A and B of coproporphyrinogen-III to yield the vinyl groups in protoporphyrinogen-IX. The chain is Oxygen-dependent coproporphyrinogen-III oxidase from Rickettsia felis (strain ATCC VR-1525 / URRWXCal2) (Rickettsia azadi).